We begin with the raw amino-acid sequence, 271 residues long: MLLAIDVRNTHTVLGLVSGTGEHAKVVQHWRIRTEAEITADELALTIDGLIGDDSETLTGVAALSTVPSVLHEMRGMFDQYWSSVPQVLIEPGVRTGLPLLVDNPKEVGADRIVNCLAAHHRFGSACIVVDFGSSICVDVVSAKGEFLGGAIAPGVQVSSDAAAARSAALRRVELTRPRSVVGKNTVECMQSGAVFGFAGLVDGLVERVRRDIDGFGAAGVTVVATGHTAPLILPETHTVDRYEEHLTLDGLRLVYERNRADQRGKARATR.

6–13 provides a ligand contact to ATP; the sequence is DVRNTHTV. 109–112 is a binding site for substrate; the sequence is GADR. Aspartate 111 serves as the catalytic Proton acceptor. Aspartate 131 is a binding site for K(+). Serine 134 provides a ligand contact to ATP. Residue threonine 186 participates in substrate binding.

It belongs to the type III pantothenate kinase family. In terms of assembly, homodimer. It depends on NH4(+) as a cofactor. Requires K(+) as cofactor.

The protein resides in the cytoplasm. It carries out the reaction (R)-pantothenate + ATP = (R)-4'-phosphopantothenate + ADP + H(+). The protein operates within cofactor biosynthesis; coenzyme A biosynthesis; CoA from (R)-pantothenate: step 1/5. Its function is as follows. Catalyzes the phosphorylation of pantothenate (Pan), the first step in CoA biosynthesis. This Mycobacteroides abscessus (strain ATCC 19977 / DSM 44196 / CCUG 20993 / CIP 104536 / JCM 13569 / NCTC 13031 / TMC 1543 / L948) (Mycobacterium abscessus) protein is Type III pantothenate kinase.